The chain runs to 225 residues: Sugar fermentation stimulation protein homolog (225 aa).

The protein belongs to the SfsA family.

This is Sugar fermentation stimulation protein homolog from Sulfurisphaera tokodaii (strain DSM 16993 / JCM 10545 / NBRC 100140 / 7) (Sulfolobus tokodaii).